The chain runs to 52 residues: Large ribosomal subunit protein bL33A (52 aa).

Belongs to the bacterial ribosomal protein bL33 family.

The sequence is that of Large ribosomal subunit protein bL33A from Staphylococcus aureus (strain USA300).